The primary structure comprises 130 residues: Small ribosomal subunit protein uS11 (130 aa).

Belongs to the universal ribosomal protein uS11 family. In terms of assembly, part of the 30S ribosomal subunit. Interacts with proteins S7 and S18. Binds to IF-3.

In terms of biological role, located on the platform of the 30S subunit, it bridges several disparate RNA helices of the 16S rRNA. Forms part of the Shine-Dalgarno cleft in the 70S ribosome. This is Small ribosomal subunit protein uS11 from Gloeobacter violaceus (strain ATCC 29082 / PCC 7421).